The sequence spans 255 residues: Superoxide dismutase [Fe] 2, chloroplastic (255 aa).

Residues 1 to 32 constitute a chloroplast transit peptide; the sequence is MAAFASALRVLPSPPAAVPRRLRSREQRQGCR. The Fe cation site is built by H67, H119, D203, and H207.

It belongs to the iron/manganese superoxide dismutase family. In terms of assembly, homodimer. Fe cation is required as a cofactor. In terms of tissue distribution, strongly expressed in the stems of the young seedlings, etiolated seedlings and embryogenic calli, but only minimally expressed in the leaves and the roots.

Its subcellular location is the plastid. The protein localises to the chloroplast. It catalyses the reaction 2 superoxide + 2 H(+) = H2O2 + O2. Destroys superoxide anion radicals which are normally produced within the cells and which are toxic to biological systems. The chain is Superoxide dismutase [Fe] 2, chloroplastic from Oryza sativa subsp. japonica (Rice).